A 399-amino-acid chain; its full sequence is Glutathione-independent formaldehyde dehydrogenase (399 aa).

Residue C47 coordinates Zn(2+). The NAD(+) site is built by G48, S49, and H52. Zn(2+)-binding residues include H68, C98, C101, C104, C112, and D170. Residues V198, D218, R223, V263, R268, H270, P300, L302, G337, and T339 each contribute to the NAD(+) site.

The protein belongs to the zinc-containing alcohol dehydrogenase family. Homotetramer. Zn(2+) serves as cofactor.

It carries out the reaction formaldehyde + NAD(+) + H2O = formate + NADH + 2 H(+). The catalysed reaction is acetaldehyde + NAD(+) + H2O = acetate + NADH + 2 H(+). The enzyme catalyses 2 formaldehyde + H2O = methanol + formate + H(+). Inactivated by bipyridine and p-chloromercuribenzoate. Functionally, dehydrogenase that catalyzes the NAD(+)-dependent oxidation of formaldehyde and acetaldehyde, and, to a lesser extent, long-chain alcohols, but is inactive against propionaldehyde, butyraldehyde, methanol and ethanol. Can also catalyze the dismutation of a wide range of aldehydes such as formaldehyde. This chain is Glutathione-independent formaldehyde dehydrogenase, found in Pseudomonas putida (Arthrobacter siderocapsulatus).